A 154-amino-acid polypeptide reads, in one-letter code: IQ domain-containing protein F3 (154 aa).

Positions 89–118 (QEQATVKLQSCIRMWQCRQCYRQMCNALCL) constitute an IQ domain.

In Homo sapiens (Human), this protein is IQ domain-containing protein F3 (IQCF3).